Reading from the N-terminus, the 382-residue chain is Anhydro-N-acetylmuramic acid kinase (382 aa).

22 to 29 (GTSMDGVD) serves as a coordination point for ATP.

Belongs to the anhydro-N-acetylmuramic acid kinase family.

The enzyme catalyses 1,6-anhydro-N-acetyl-beta-muramate + ATP + H2O = N-acetyl-D-muramate 6-phosphate + ADP + H(+). It functions in the pathway amino-sugar metabolism; 1,6-anhydro-N-acetylmuramate degradation. Its pathway is cell wall biogenesis; peptidoglycan recycling. Catalyzes the specific phosphorylation of 1,6-anhydro-N-acetylmuramic acid (anhMurNAc) with the simultaneous cleavage of the 1,6-anhydro ring, generating MurNAc-6-P. Is required for the utilization of anhMurNAc either imported from the medium or derived from its own cell wall murein, and thus plays a role in cell wall recycling. This is Anhydro-N-acetylmuramic acid kinase from Burkholderia ambifaria (strain ATCC BAA-244 / DSM 16087 / CCUG 44356 / LMG 19182 / AMMD) (Burkholderia cepacia (strain AMMD)).